The sequence spans 391 residues: Elongation factor Tu 1 (391 aa).

A tr-type G domain is found at 10 to 201; sequence KPHVNIGTIG…EVDNYIPTPE (192 aa). A G1 region spans residues 19–26; that stretch reads GHVDHGKT. 19 to 26 lines the GTP pocket; that stretch reads GHVDHGKT. Threonine 26 contacts Mg(2+). Residues 55–59 are G2; it reads GITIS. Positions 76–79 are G3; that stretch reads DCPG. Residues 76–80 and 131–134 contribute to the GTP site; these read DCPGH and NKVD. A G4 region spans residues 131–134; the sequence is NKVD. Positions 169–171 are G5; sequence SAL.

It belongs to the TRAFAC class translation factor GTPase superfamily. Classic translation factor GTPase family. EF-Tu/EF-1A subfamily. Monomer.

The protein localises to the cytoplasm. The enzyme catalyses GTP + H2O = GDP + phosphate + H(+). GTP hydrolase that promotes the GTP-dependent binding of aminoacyl-tRNA to the A-site of ribosomes during protein biosynthesis. This Bartonella quintana (strain Toulouse) (Rochalimaea quintana) protein is Elongation factor Tu 1.